The following is a 176-amino-acid chain: NAD(P)H-quinone oxidoreductase subunit 6, chloroplastic (176 aa).

5 helical membrane passes run 10–30 (ILLV…VLLT), 32–52 (PISS…FYIP), 61–81 (AQLL…VMFM), 92–112 (LWTI…FSLI), and 152–172 (FYLP…GAIA).

The protein belongs to the complex I subunit 6 family. NDH is composed of at least 16 different subunits, 5 of which are encoded in the nucleus.

It localises to the plastid. Its subcellular location is the chloroplast thylakoid membrane. It carries out the reaction a plastoquinone + NADH + (n+1) H(+)(in) = a plastoquinol + NAD(+) + n H(+)(out). The catalysed reaction is a plastoquinone + NADPH + (n+1) H(+)(in) = a plastoquinol + NADP(+) + n H(+)(out). Functionally, NDH shuttles electrons from NAD(P)H:plastoquinone, via FMN and iron-sulfur (Fe-S) centers, to quinones in the photosynthetic chain and possibly in a chloroplast respiratory chain. The immediate electron acceptor for the enzyme in this species is believed to be plastoquinone. Couples the redox reaction to proton translocation, and thus conserves the redox energy in a proton gradient. The sequence is that of NAD(P)H-quinone oxidoreductase subunit 6, chloroplastic (ndhG) from Chloranthus spicatus (Chulantree).